Reading from the N-terminus, the 333-residue chain is Cytochrome f (333 aa).

Residues 1–44 (MRNACTRARLTRTARAMVKTLFIAIASVTFFFTSDLALPQSAAA) form the signal peptide. Positions 45, 66, 69, and 70 each coordinate heme. The helical transmembrane segment at 299–318 (VGWLIAFVALVMLAQVMLVL) threads the bilayer.

It belongs to the cytochrome f family. In terms of assembly, the 4 large subunits of the cytochrome b6-f complex are cytochrome b6, subunit IV (17 kDa polypeptide, PetD), cytochrome f and the Rieske protein, while the 4 small subunits are PetG, PetL, PetM and PetN. The complex functions as a dimer. Requires heme as cofactor.

The protein localises to the cellular thylakoid membrane. In terms of biological role, component of the cytochrome b6-f complex, which mediates electron transfer between photosystem II (PSII) and photosystem I (PSI), cyclic electron flow around PSI, and state transitions. The sequence is that of Cytochrome f from Nostoc sp. (strain PCC 7120 / SAG 25.82 / UTEX 2576).